The sequence spans 338 residues: Sesquiterpene synthase 2 (338 aa).

Mg(2+) is bound by residues Asp93, Asn228, Ser232, and Glu236. Positions 93–97 match the DDXXD motif motif; sequence DNISD. The NSE/DTE motif signature appears at 228–236; the sequence is NDIFSYNVE. Residues Arg316 and Tyr317 each contribute to the (2E,6E)-farnesyl diphosphate site.

The protein belongs to the terpene synthase family. Mg(2+) serves as cofactor.

The enzyme catalyses (2E,6E)-farnesyl diphosphate = alpha-copaene + diphosphate. The catalysed reaction is (2E,6E)-farnesyl diphosphate = beta-copaene + diphosphate. It catalyses the reaction (2E,6E)-farnesyl diphosphate = alpha-muurolene + diphosphate. It carries out the reaction (2E,6E)-farnesyl diphosphate = gamma-muurolene + diphosphate. The enzyme catalyses (2E,6E)-farnesyl diphosphate = delta-cadinene + diphosphate. In terms of biological role, terpene cyclase that catalyzes the cyclization of farnesyl diphosphate (FPP) to various sesquiterpenes, including alpha-copaene, beta-copaene, beta-elemene, alpha-muurolene, gamma-muurolene and delta-cadinene. The sequence is that of Sesquiterpene synthase 2 from Postia placenta (strain ATCC 44394 / Madison 698-R) (Brown rot fungus).